A 185-amino-acid polypeptide reads, in one-letter code: Acireductone dioxygenase (185 aa).

Fe(2+) contacts are provided by His96, His98, Glu102, and His140. Residues His96, His98, Glu102, and His140 each contribute to the Ni(2+) site.

Belongs to the acireductone dioxygenase (ARD) family. In terms of assembly, monomer. The cofactor is Fe(2+). Ni(2+) serves as cofactor.

It catalyses the reaction 1,2-dihydroxy-5-(methylsulfanyl)pent-1-en-3-one + O2 = 3-(methylsulfanyl)propanoate + CO + formate + 2 H(+). It carries out the reaction 1,2-dihydroxy-5-(methylsulfanyl)pent-1-en-3-one + O2 = 4-methylsulfanyl-2-oxobutanoate + formate + 2 H(+). The protein operates within amino-acid biosynthesis; L-methionine biosynthesis via salvage pathway; L-methionine from S-methyl-5-thio-alpha-D-ribose 1-phosphate: step 5/6. Functionally, catalyzes 2 different reactions between oxygen and the acireductone 1,2-dihydroxy-3-keto-5-methylthiopentene (DHK-MTPene) depending upon the metal bound in the active site. Fe-containing acireductone dioxygenase (Fe-ARD) produces formate and 2-keto-4-methylthiobutyrate (KMTB), the alpha-ketoacid precursor of methionine in the methionine recycle pathway. Ni-containing acireductone dioxygenase (Ni-ARD) produces methylthiopropionate, carbon monoxide and formate, and does not lie on the methionine recycle pathway. This is Acireductone dioxygenase from Marinobacter nauticus (strain ATCC 700491 / DSM 11845 / VT8) (Marinobacter aquaeolei).